The primary structure comprises 678 residues: DNA ligase (678 aa).

Residues 36 to 40, 85 to 86, and E117 contribute to the NAD(+) site; these read DSEFD and SL. The active-site N6-AMP-lysine intermediate is K119. The NAD(+) site is built by R140, E177, K294, and K318. Zn(2+) contacts are provided by C412, C415, C430, and C436. A BRCT domain is found at 595–678; the sequence is IIDAPLLGKT…TWWQHYGNAV (84 aa).

It belongs to the NAD-dependent DNA ligase family. LigA subfamily. The cofactor is Mg(2+). Mn(2+) serves as cofactor.

The catalysed reaction is NAD(+) + (deoxyribonucleotide)n-3'-hydroxyl + 5'-phospho-(deoxyribonucleotide)m = (deoxyribonucleotide)n+m + AMP + beta-nicotinamide D-nucleotide.. In terms of biological role, DNA ligase that catalyzes the formation of phosphodiester linkages between 5'-phosphoryl and 3'-hydroxyl groups in double-stranded DNA using NAD as a coenzyme and as the energy source for the reaction. It is essential for DNA replication and repair of damaged DNA. This is DNA ligase from Dichelobacter nodosus (strain VCS1703A).